The primary structure comprises 45 residues: Protamine Z2 (45 aa).

The span at 1-23 (MKCGRKRRRRRRHACKRKKRACK) shows a compositional bias: basic residues. Residues 1 to 26 (MKCGRKRRRRRRHACKRKKRACKQRS) form a disordered region.

Testis.

Its subcellular location is the nucleus. It localises to the chromosome. Its function is as follows. Protamines substitute for histones in the chromatin of sperm during the haploid phase of spermatogenesis. They compact sperm DNA into a highly condensed, stable and inactive complex. This chain is Protamine Z2, found in Scyliorhinus canicula (Small-spotted catshark).